A 134-amino-acid chain; its full sequence is Profilin-2 (134 aa).

Threonine 114 carries the phosphothreonine modification.

Belongs to the profilin family. As to quaternary structure, occurs in many kinds of cells as a complex with monomeric actin in a 1:1 ratio. In terms of processing, phosphorylated by MAP kinases.

Its subcellular location is the cytoplasm. It localises to the cytoskeleton. Its function is as follows. Binds to actin and affects the structure of the cytoskeleton. At high concentrations, profilin prevents the polymerization of actin, whereas it enhances it at low concentrations. By binding to PIP2, it inhibits the formation of IP3 and DG. The protein is Profilin-2 (PRO2) of Nicotiana tabacum (Common tobacco).